The chain runs to 625 residues: Mitochondrial Rho GTPase 1 (625 aa).

Residues 1–601 (MSDDETLADV…LRRVFYLNDS (601 aa)) lie on the Cytoplasmic side of the membrane. The region spanning 3 to 170 (DDETLADVRI…EIFYYAQKAV (168 aa)) is the Miro 1 domain. Residues 16–23 (GDEGCGKT), 62–66 (DLSIK), and 123–126 (NKSD) contribute to the GTP site. 2 EF-hand domains span residues 188–223 (RARKALIRVFKICDRDNDGYLSDTELNDFQKLCFGI) and 308–343 (EGVQFVSALFEKYDEDKDGCLSPSELQNLFSVCPVP). 10 residues coordinate Ca(2+): aspartate 201, aspartate 203, aspartate 205, tyrosine 207, glutamate 212, aspartate 321, aspartate 323, aspartate 325, cysteine 327, and glutamate 332. Positions 420–625 (HGTDRKVFQC…LAGFLVLKNL (206 aa)) constitute a Miro 2 domain. GTP is bound by residues 433 to 440 (GAKDAGKT), 470 to 474 (RVKEE), and 537 to 540 (TKVE). The helical; Anchor for type IV membrane protein transmembrane segment at 602-622 (NLLSKITFGAAIVALAGFLVL) threads the bilayer. Residues 623–625 (KNL) lie on the Mitochondrial intermembrane side of the membrane.

The protein belongs to the mitochondrial Rho GTPase family.

The protein resides in the mitochondrion outer membrane. Mitochondrial GTPase involved in mitochondrial trafficking. Probably involved in control of anterograde transport of mitochondria and their subcellular distribution. Plays a role in maintaining mitochondrial morphology. The sequence is that of Mitochondrial Rho GTPase 1 from Caenorhabditis elegans.